Consider the following 709-residue polypeptide: Myotubularin-related protein 11 (709 aa).

The interval 1 to 39 is disordered; it reads MWWGGRGQSFNIAPQKEEPEMGSVQENRMPEPRSRQPSS. Residues 196 to 639 enclose the Myotubularin phosphatase domain; sequence METAEDWETE…PQIRLWRRCY (444 aa).

Belongs to the protein-tyrosine phosphatase family. Non-receptor class myotubularin subfamily. As to expression, expressed in bone marrow, spleen and thymus.

This is Myotubularin-related protein 11 (MTMR11) from Homo sapiens (Human).